The primary structure comprises 448 residues: Probable glycine dehydrogenase (decarboxylating) subunit 1 (448 aa).

It belongs to the GcvP family. N-terminal subunit subfamily. The glycine cleavage system is composed of four proteins: P, T, L and H. In this organism, the P 'protein' is a heterodimer of two subunits.

It carries out the reaction N(6)-[(R)-lipoyl]-L-lysyl-[glycine-cleavage complex H protein] + glycine + H(+) = N(6)-[(R)-S(8)-aminomethyldihydrolipoyl]-L-lysyl-[glycine-cleavage complex H protein] + CO2. Functionally, the glycine cleavage system catalyzes the degradation of glycine. The P protein binds the alpha-amino group of glycine through its pyridoxal phosphate cofactor; CO(2) is released and the remaining methylamine moiety is then transferred to the lipoamide cofactor of the H protein. The sequence is that of Probable glycine dehydrogenase (decarboxylating) subunit 1 from Thermomicrobium roseum (strain ATCC 27502 / DSM 5159 / P-2).